The primary structure comprises 138 residues: Small ribosomal subunit protein uS11 (138 aa).

Positions 1–12 (MAQAKKGGTAAK) are enriched in low complexity. Disordered stretches follow at residues 1–32 (MAQA…AAHI) and 119–138 (ISDV…RRRV). The span at 13-22 (KGQKTRRREK) shows a compositional bias: basic residues.

Belongs to the universal ribosomal protein uS11 family. In terms of assembly, part of the 30S ribosomal subunit. Interacts with proteins S7 and S18. Binds to IF-3.

Its function is as follows. Located on the platform of the 30S subunit, it bridges several disparate RNA helices of the 16S rRNA. Forms part of the Shine-Dalgarno cleft in the 70S ribosome. This chain is Small ribosomal subunit protein uS11, found in Mycolicibacterium smegmatis (strain ATCC 700084 / mc(2)155) (Mycobacterium smegmatis).